Here is a 118-residue protein sequence, read N- to C-terminus: UPF0148 protein M1627_1409 (118 aa).

It belongs to the UPF0148 family.

The protein is UPF0148 protein M1627_1409 of Saccharolobus islandicus (strain M.16.27) (Sulfolobus islandicus).